A 457-amino-acid polypeptide reads, in one-letter code: UDP-N-acetylmuramate--L-alanine ligase (457 aa).

Position 109 to 115 (109 to 115) interacts with ATP; it reads GTDGKTT.

This sequence belongs to the MurCDEF family.

It is found in the cytoplasm. It catalyses the reaction UDP-N-acetyl-alpha-D-muramate + L-alanine + ATP = UDP-N-acetyl-alpha-D-muramoyl-L-alanine + ADP + phosphate + H(+). It participates in cell wall biogenesis; peptidoglycan biosynthesis. Cell wall formation. This is UDP-N-acetylmuramate--L-alanine ligase from Thermotoga neapolitana (strain ATCC 49049 / DSM 4359 / NBRC 107923 / NS-E).